The primary structure comprises 396 residues: Elongation factor Tu (396 aa).

In terms of domain architecture, tr-type G spans 10–205 (KPHVNIGTIG…AVDESIPDPV (196 aa)). A G1 region spans residues 19-26 (GHVDHGKT). 19–26 (GHVDHGKT) is a binding site for GTP. T26 is a binding site for Mg(2+). Residues 62 to 66 (GITIN) are G2. Residues 83-86 (DAPG) form a G3 region. GTP-binding positions include 83–87 (DAPGH) and 138–141 (NKSD). A G4 region spans residues 138 to 141 (NKSD). Positions 175–177 (SAL) are G5.

This sequence belongs to the TRAFAC class translation factor GTPase superfamily. Classic translation factor GTPase family. EF-Tu/EF-1A subfamily. Monomer.

It is found in the cytoplasm. It catalyses the reaction GTP + H2O = GDP + phosphate + H(+). In terms of biological role, GTP hydrolase that promotes the GTP-dependent binding of aminoacyl-tRNA to the A-site of ribosomes during protein biosynthesis. This is Elongation factor Tu from Mycobacterium marinum (strain ATCC BAA-535 / M).